Consider the following 384-residue polypeptide: MDDNPTAVKLDQGGNQAPQGQGRRRLPKALGYITGDMKEFANWLKDKPQALQFVDWVLRGISQVVFVSNPISGILILVGLLVQNPWCALNGCVGTVVSTLTALLLNQDRSAITAGLQGYNATLVGILMAIYSDKGNYFWWLLFPVSAMSMTCPIFSSALNSVLSKWDLPVFTLPFNMALSMYLSATGHYNPFFPSTLVTPVTSVPNVTWPDLSALQLLKSLPVGVGQIYGCDNPWAGGIFLGAILLSSPLMCLHAAIGSLLGIIAGLSLSAPFENIYAGLWGFNSSLACIAIGGMFMALTWQTHLLALACALFTAYLGASMSHVMAVVGLPSCTWPFCLATLLFLLLTTKNPNIYKMPISKVTYPEENRIFYLQSTKRTVQGPL.

Residues 1–23 (MDDNPTAVKLDQGGNQAPQGQGR) are disordered. 5 helical membrane-spanning segments follow: residues 61 to 81 (ISQV…VGLL), 85 to 105 (PWCA…ALLL), 111 to 131 (AITA…MAIY), 138 to 158 (FWWL…FSSA), and 168 to 188 (LPVF…ATGH). N-linked (GlcNAc...) asparagine glycosylation occurs at asparagine 206. 3 consecutive transmembrane segments (helical) span residues 237–257 (GGIF…HAAI), 279–299 (GLWG…FMAL), and 327–347 (VVGL…FLLL).

Belongs to the urea transporter family. Homotrimer; each subunit contains a pore through which urea permeates. Identified in a complex with STOM.

The protein localises to the cell membrane. It localises to the basolateral cell membrane. It catalyses the reaction urea(in) = urea(out). Its function is as follows. Mediates the transport of urea driven by a concentration gradient across the cell membranes of erythrocytes and the renal inner medullary collecting duct which is critical to the urinary concentrating mechanism. Facilitates water transport in erythrocytes. The chain is Urea transporter 1 (SLC14A1) from Capra hircus (Goat).